Consider the following 354-residue polypeptide: Guanine nucleotide-binding protein G(t) subunit alpha-3 (354 aa).

Positions 1–26 (MGIGISSESKESAKRSKELEKKLQED) are disordered. Gly2 carries N-myristoyl glycine lipidation. The segment covering 8–26 (ESKESAKRSKELEKKLQED) has biased composition (basic and acidic residues). Residues 32 to 354 (RTVKLLLLGA…KENLKDCGLF (323 aa)) enclose the G-alpha domain. Positions 35–48 (KLLLLGAGESGKST) are G1 motif. GTP-binding positions include 40–47 (GAGESGKS), 175–181 (LHSRVKT), 200–204 (DVGGQ), 269–272 (NKKD), and Ala326. 2 residues coordinate Mg(2+): Ser47 and Thr181. The segment at 173–181 (DVLHSRVKT) is G2 motif. Positions 196–205 (FRMFDVGGQR) are G3 motif. Positions 265–272 (VLFLNKKD) are G4 motif. The segment at 324–329 (TCATDT) is G5 motif.

This sequence belongs to the G-alpha family. G(i/o/t/z) subfamily. G proteins are composed of 3 units; alpha, beta and gamma, respectively GNAT3, GNB1 and GNG13 for Gustducin heterotrimer for bitter taste transduction. The alpha chain contains the guanine nucleotide binding site. Component of the TAS2R14-GNAT3 complex, consisting of TAS2R14, GNAT3, GNB1 and GNG2; within the complex interacts with TAS2R14; this complex plays a role in the perception of bitterness. Gustducin heterotrimer may also be composed of GNAT3, GNB3 and GNG13. As to expression, expressed in epithelial cells of taste buds of the circumvallate, foliate and fungiform. Detected in various region of the respiratory track. Expressed also in spermatozoa.

It is found in the cytoplasm. Its function is as follows. Guanine nucleotide-binding protein (G protein) alpha subunit playing a prominent role in bitter and sweet taste transduction as well as in umami (monosodium glutamate, monopotassium glutamate, and inosine monophosphate) taste transduction. In Bos taurus (Bovine), this protein is Guanine nucleotide-binding protein G(t) subunit alpha-3 (GNAT3).